Reading from the N-terminus, the 474-residue chain is tRNA-2-methylthio-N(6)-dimethylallyladenosine synthase (474 aa).

The MTTase N-terminal domain occupies 3–120 (KKLHIKTWGC…LPDMIEQVRR (118 aa)). Cys12, Cys49, Cys83, Cys157, Cys161, and Cys164 together coordinate [4Fe-4S] cluster. The 233-residue stretch at 143 to 375 (RAEGPTAFVS…QDRITQQAMR (233 aa)) folds into the Radical SAM core domain. The 64-residue stretch at 378-441 (RHMMGTVQRI…TNSLRGKFIR (64 aa)) folds into the TRAM domain.

This sequence belongs to the methylthiotransferase family. MiaB subfamily. In terms of assembly, monomer. [4Fe-4S] cluster is required as a cofactor.

The protein resides in the cytoplasm. The enzyme catalyses N(6)-dimethylallyladenosine(37) in tRNA + (sulfur carrier)-SH + AH2 + 2 S-adenosyl-L-methionine = 2-methylsulfanyl-N(6)-dimethylallyladenosine(37) in tRNA + (sulfur carrier)-H + 5'-deoxyadenosine + L-methionine + A + S-adenosyl-L-homocysteine + 2 H(+). Its function is as follows. Catalyzes the methylthiolation of N6-(dimethylallyl)adenosine (i(6)A), leading to the formation of 2-methylthio-N6-(dimethylallyl)adenosine (ms(2)i(6)A) at position 37 in tRNAs that read codons beginning with uridine. This chain is tRNA-2-methylthio-N(6)-dimethylallyladenosine synthase, found in Shewanella sp. (strain W3-18-1).